The chain runs to 118 residues: Large ribosomal subunit protein bL19 (118 aa).

The protein belongs to the bacterial ribosomal protein bL19 family.

Its function is as follows. This protein is located at the 30S-50S ribosomal subunit interface and may play a role in the structure and function of the aminoacyl-tRNA binding site. The polypeptide is Large ribosomal subunit protein bL19 (Campylobacter jejuni subsp. doylei (strain ATCC BAA-1458 / RM4099 / 269.97)).